The chain runs to 196 residues: V-type proton ATPase subunit E (196 aa).

The protein belongs to the V-ATPase E subunit family.

In terms of biological role, produces ATP from ADP in the presence of a proton gradient across the membrane. This is V-type proton ATPase subunit E from Clostridium botulinum (strain Eklund 17B / Type B).